The chain runs to 1403 residues: DNA-directed RNA polymerase subunit beta' (1403 aa).

Zn(2+) contacts are provided by C68, C70, C83, and C86. Residues D459, D461, and D463 each coordinate Mg(2+). Zn(2+)-binding residues include C814, C887, C894, and C897.

It belongs to the RNA polymerase beta' chain family. The RNAP catalytic core consists of 2 alpha, 1 beta, 1 beta' and 1 omega subunit. When a sigma factor is associated with the core the holoenzyme is formed, which can initiate transcription. The cofactor is Mg(2+). Zn(2+) is required as a cofactor.

It catalyses the reaction RNA(n) + a ribonucleoside 5'-triphosphate = RNA(n+1) + diphosphate. Functionally, DNA-dependent RNA polymerase catalyzes the transcription of DNA into RNA using the four ribonucleoside triphosphates as substrates. This Solibacter usitatus (strain Ellin6076) protein is DNA-directed RNA polymerase subunit beta'.